Here is a 226-residue protein sequence, read N- to C-terminus: Protein DVU_0532 (226 aa).

The next 6 membrane-spanning stretches (helical) occupy residues 1–23 (MYAFLTGPMLWASLLVFFGGLLA), 46–57 (AIGLQGAVQSAL), 73–99 (FFTVAFFLFHIGAVLVPLFLAGHNVIL), 112–131 (MGVADTLTVLAIIGLVMIAL), 141–164 (ILTTGYDWFILAVSAAPFVTGFLA), and 194–222 (LSHIVLFFMSRGQLGMDYAIKRGGATRGP).

Heme b serves as cofactor.

Its subcellular location is the cell membrane. In terms of biological role, HMWC (high-molecular-weight cytochrome c), ORF2, ORF3, ORF4, ORF5 and ORF6 in the HMC operon form a transmembrane protein complex that allows electron flow from the periplasmic hydrogenase to the cytoplasmic enzymes that catalyze reduction of sulfates. In Nitratidesulfovibrio vulgaris (strain ATCC 29579 / DSM 644 / CCUG 34227 / NCIMB 8303 / VKM B-1760 / Hildenborough) (Desulfovibrio vulgaris), this protein is Protein DVU_0532.